We begin with the raw amino-acid sequence, 250 residues long: MLFLHDVWVNWFEGEENGYNVCHFHEWRKEDTVELLDQTPLLRVPSVLFHYIENDLSELPKELLDQVHQKSYVRKNHERTKLEYCFVVTDGIGIIAVDTIGYTIPVRKSRLIPRQEQLVYEMVKDVEPESFQFEPAQLESSKEYHILSLAPEHVRGLTRKERQIKQLMFMALDQLKGLKNRAEIVYWYTEWNPHMYEQIKRMSFEEIWDMLYNETIEGWSDKHLAFCENLIKGQPFFEKLWEMEQESKVN.

This sequence belongs to the UPF0736 family.

The sequence is that of UPF0736 protein RBAM_011410 from Bacillus velezensis (strain DSM 23117 / BGSC 10A6 / LMG 26770 / FZB42) (Bacillus amyloliquefaciens subsp. plantarum).